We begin with the raw amino-acid sequence, 617 residues long: MNKYPLLSLINSPDDLRLLSKDKLPQLCQELRSYLLESVSQSSGHLASGLGTVELTVALHYVFKTPFDQLLWDVGHQAYPHKILTGRRDKMSTIRQKGGLHPFPWREESEFDVLSVGHSSTSISAGLGIAIAAQKENLGRKTICVIGDGAITAGMAFEALNHAGSVHTDMLVILNDNEMSISENVGALNNHLARLLSGSIYSTLRESGKKILSGLPPIKEFVKKTEEHVKGFVSPVGTLFEQLGFNYIGPIDGHNIHELISTLKNMQSLSGPQFLHIKTKKGKGYAPAEKDPIGFHGVPKFDHKLGELPKSSTTPTYSQIFGSWLCEIAAQDEKLIGITPAMREGSGMVEFSQQFPQQYFDVAIAEQHAVTFAAGLAIAGYKPVVAIYSTFLQRAYDQLIHDVAIQNLPVLFAIDRAGIVGADGQTHQGAFDLSFMRCIPNLVIMTPSNENECRQMLYTGYKCGKPAAVRYPRGNAIGVKLEPLAELPLGKSKLIRQGKNIAILNFGTLLSEATKVAEDLDATVVDMRFVKPLDTQRIQEIAQTHSLIVTLEENAIQGGAGSAVAETLYQQQQKVSLLQLGLPDNFIPQGTQKEMLAELKLNAEGIFEQIKQFLQKI.

Residues histidine 76 and 117 to 119 (GHS) each bind thiamine diphosphate. Aspartate 148 contacts Mg(2+). Thiamine diphosphate-binding positions include 149–150 (GA), asparagine 177, tyrosine 285, and glutamate 366. Asparagine 177 contributes to the Mg(2+) binding site.

It belongs to the transketolase family. DXPS subfamily. As to quaternary structure, homodimer. The cofactor is Mg(2+). Thiamine diphosphate is required as a cofactor.

It carries out the reaction D-glyceraldehyde 3-phosphate + pyruvate + H(+) = 1-deoxy-D-xylulose 5-phosphate + CO2. The protein operates within metabolic intermediate biosynthesis; 1-deoxy-D-xylulose 5-phosphate biosynthesis; 1-deoxy-D-xylulose 5-phosphate from D-glyceraldehyde 3-phosphate and pyruvate: step 1/1. In terms of biological role, catalyzes the acyloin condensation reaction between C atoms 2 and 3 of pyruvate and glyceraldehyde 3-phosphate to yield 1-deoxy-D-xylulose-5-phosphate (DXP). This chain is 1-deoxy-D-xylulose-5-phosphate synthase, found in Histophilus somni (strain 2336) (Haemophilus somnus).